Here is a 29-residue protein sequence, read N- to C-terminus: Cyclotide mang-A (29 aa).

Positions 1–29 (GFPTCGETCTLGTCNTPGCTCSWPICTRD) form a cross-link, cyclopeptide (Gly-Asp). 3 cysteine pairs are disulfide-bonded: C5–C19, C9–C21, and C14–C26.

This sequence belongs to the cyclotide family. Moebius subfamily. This is a cyclic peptide.

Probably participates in a plant defense mechanism. The protein is Cyclotide mang-A of Melicytus angustifolius (Hymenanthera angustifolia).